Here is a 280-residue protein sequence, read N- to C-terminus: Putative pyruvate, phosphate dikinase regulatory protein (280 aa).

Gly-152–Thr-159 contacts ADP.

This sequence belongs to the pyruvate, phosphate/water dikinase regulatory protein family. PDRP subfamily.

It carries out the reaction N(tele)-phospho-L-histidyl/L-threonyl-[pyruvate, phosphate dikinase] + ADP = N(tele)-phospho-L-histidyl/O-phospho-L-threonyl-[pyruvate, phosphate dikinase] + AMP + H(+). The enzyme catalyses N(tele)-phospho-L-histidyl/O-phospho-L-threonyl-[pyruvate, phosphate dikinase] + phosphate + H(+) = N(tele)-phospho-L-histidyl/L-threonyl-[pyruvate, phosphate dikinase] + diphosphate. Its function is as follows. Bifunctional serine/threonine kinase and phosphorylase involved in the regulation of the pyruvate, phosphate dikinase (PPDK) by catalyzing its phosphorylation/dephosphorylation. This chain is Putative pyruvate, phosphate dikinase regulatory protein, found in Clostridioides difficile (strain 630) (Peptoclostridium difficile).